Reading from the N-terminus, the 340-residue chain is Phosphoribosylformylglycinamidine cyclo-ligase (340 aa).

The protein belongs to the AIR synthase family.

It is found in the cytoplasm. It carries out the reaction 2-formamido-N(1)-(5-O-phospho-beta-D-ribosyl)acetamidine + ATP = 5-amino-1-(5-phospho-beta-D-ribosyl)imidazole + ADP + phosphate + H(+). It functions in the pathway purine metabolism; IMP biosynthesis via de novo pathway; 5-amino-1-(5-phospho-D-ribosyl)imidazole from N(2)-formyl-N(1)-(5-phospho-D-ribosyl)glycinamide: step 2/2. This Streptococcus pyogenes serotype M18 (strain MGAS8232) protein is Phosphoribosylformylglycinamidine cyclo-ligase.